We begin with the raw amino-acid sequence, 321 residues long: uncharacterized protein (321 aa).

Tyrosine 60 acts as the Proton donor in catalysis. Position 118 (histidine 118) interacts with substrate.

It belongs to the aldo/keto reductase family.

This is an uncharacterized protein from Schizosaccharomyces pombe (strain 972 / ATCC 24843) (Fission yeast).